The following is a 1133-amino-acid chain: Lysylphosphatidylglycerol biosynthesis bifunctional protein LysX (1133 aa).

Residues 1–626 (MTTVDASPGI…LLHHDGSTPD (626 aa)) form a phosphatidylglycerol lysyltransferase region. 7 helical membrane passes run 43 to 63 (VPAA…IASV), 82 to 102 (LFNF…LAAA), 109 to 129 (IAWL…AVDM), 140 to 160 (FGEN…VLSY), 177 to 197 (AVLV…VELF), 233 to 253 (LNAI…IVLF), and 575 to 595 (LIPR…LPFS). The lysine--tRNA ligase stretch occupies residues 627 to 1133 (VSGLQTADVD…TLPFPLAKPH (507 aa)). Mg(2+)-binding residues include aspartate 1045 and glutamate 1052.

The protein in the N-terminal section; belongs to the LPG synthetase family. This sequence in the C-terminal section; belongs to the class-II aminoacyl-tRNA synthetase family. Mg(2+) is required as a cofactor.

The protein resides in the cell membrane. The catalysed reaction is tRNA(Lys) + L-lysine + ATP = L-lysyl-tRNA(Lys) + AMP + diphosphate. The enzyme catalyses L-lysyl-tRNA(Lys) + a 1,2-diacyl-sn-glycero-3-phospho-(1'-sn-glycerol) = a 1,2-diacyl-sn-glycero-3-phospho-1'-(3'-O-L-lysyl)-sn-glycerol + tRNA(Lys). Functionally, catalyzes the production of L-lysyl-tRNA(Lys)transfer and the transfer of a lysyl group from L-lysyl-tRNA(Lys) to membrane-bound phosphatidylglycerol (PG), which produces lysylphosphatidylglycerol (LPG), one of the components of the bacterial membrane with a positive net charge. LPG synthesis contributes to the resistance to cationic antimicrobial peptides (CAMPs) and likely protects M.tuberculosis against the CAMPs produced by competiting microorganisms (bacteriocins). In fact, the modification of anionic phosphatidylglycerol with positively charged L-lysine results in repulsion of the peptides. The protein is Lysylphosphatidylglycerol biosynthesis bifunctional protein LysX (lysX) of Mycobacterium leprae (strain Br4923).